Reading from the N-terminus, the 479-residue chain is Phosphatidylinositol 4-kinase type 2-beta (479 aa).

The span at 1 to 10 (MESGSEEPDE) shows a compositional bias: acidic residues. Residues 1–91 (MESGSEEPDE…PRVGAGHTGH (91 aa)) form a disordered region. Positions 18-34 (PALHAGPPAGRAAPGGA) are enriched in low complexity. The segment covering 42 to 62 (GLEEEEEGEEDSGPEGDGEEE) has biased composition (acidic residues). Residues 118 to 449 (GVLPERISQG…VQMPRVIVER (332 aa)) enclose the PI3K/PI4K catalytic domain. The segment at 124-130 (ISQGSSG) is G-loop. Residues S131 and K146 each coordinate ATP. The important for substrate binding stretch occupies residues 151-153 (EPY). Residues 159–172 (KWTKYFHKICCPCC) are important for interaction with membranes. ATP is bound by residues 255 to 258 (QLFV) and 269 to 270 (RK). An important for interaction with membranes region spans residues 262–270 (KEADYWLRK). Residues 299 to 307 (RNTDRGNDN) form a catalytic loop region. Residues 340–360 (AIDNGLAFPFKHPDEWRAYPF) are activation loop. An ATP-binding site is contributed by D342. Residues 355 to 364 (WRAYPFHWAW) form an important for interaction with membranes region.

It belongs to the PI3/PI4-kinase family. Type II PI4K subfamily.

It localises to the cytoplasm. The protein resides in the cytosol. Its subcellular location is the golgi apparatus membrane. The protein localises to the endoplasmic reticulum membrane. It is found in the cell membrane. It localises to the early endosome membrane. The catalysed reaction is a 1,2-diacyl-sn-glycero-3-phospho-(1D-myo-inositol) + ATP = a 1,2-diacyl-sn-glycero-3-phospho-(1D-myo-inositol 4-phosphate) + ADP + H(+). Contributes to the overall PI4-kinase activity of the cell. This contribution may be especially significant in plasma membrane, endosomal and Golgi compartments. The phosphorylation of phosphatidylinositol (PI) to PI4P is the first committed step in the generation of phosphatidylinositol 4,5-bisphosphate (PIP2), a precursor of the second messenger inositol 1,4,5-trisphosphate (InsP3). The chain is Phosphatidylinositol 4-kinase type 2-beta (PI4K2B) from Gallus gallus (Chicken).